The sequence spans 312 residues: Dihydroorotate dehydrogenase B (NAD(+)), catalytic subunit (312 aa).

Residues serine 23 and 47–48 (KA) contribute to the FMN site. Residues lysine 47 and 71 to 75 (NAIGL) contribute to the substrate site. Residues asparagine 103 and asparagine 131 each coordinate FMN. Asparagine 131 contributes to the substrate binding site. Cysteine 134 serves as the catalytic Nucleophile. FMN-binding residues include lysine 171 and isoleucine 197. 198-199 (NT) is a substrate binding site. FMN is bound by residues glycine 223, 249 to 250 (GG), and 271 to 272 (GT).

This sequence belongs to the dihydroorotate dehydrogenase family. Type 1 subfamily. In terms of assembly, heterotetramer of 2 PyrK and 2 PyrD type B subunits. Requires FMN as cofactor.

It localises to the cytoplasm. The enzyme catalyses (S)-dihydroorotate + NAD(+) = orotate + NADH + H(+). It participates in pyrimidine metabolism; UMP biosynthesis via de novo pathway; orotate from (S)-dihydroorotate (NAD(+) route): step 1/1. Catalyzes the conversion of dihydroorotate to orotate with NAD(+) as electron acceptor. The chain is Dihydroorotate dehydrogenase B (NAD(+)), catalytic subunit (pyrDB) from Streptococcus pneumoniae (strain ATCC BAA-255 / R6).